Reading from the N-terminus, the 1353-residue chain is Ankyrin repeat domain-containing protein 36B (1353 aa).

ANK repeat units lie at residues 19–48 (YHLK…DANK), 52–81 (KERT…ELNL), 85–114 (EDRT…DPNI), 118–147 (FGRT…NIEE), 151–180 (NEYQ…NVNA), and 184–213 (LGRS…DVFS). Disordered stretches follow at residues 249–307 (PINS…KDSV) and 349–607 (MGGG…KATS). Polar residues predominate over residues 250 to 259 (INSNPVSPQK). 2 stretches are compositionally biased toward basic and acidic residues: residues 260–272 (QRAE…DKDS) and 295–306 (PAEKATSDEKDS). Polar residues-rich tracts occupy residues 355–367 (GTVS…ASKT) and 389–400 (GTVSSQKQQALK). 2 stretches are compositionally biased toward basic and acidic residues: residues 436–455 (TSDE…DGEI) and 471–491 (SVKE…EKSR). Residues 579 to 600 (VSNIPTEIKDGQQSGTVSSQKQ) are compositionally biased toward polar residues. Coiled-coil stretches lie at residues 731–762 (AEQD…QIHS), 821–908 (IKLK…YRIE), 937–1055 (SETD…DHDQ), and 1119–1344 (VFEH…LQHS).

Belongs to the ANKRD36 family.

The protein is Ankyrin repeat domain-containing protein 36B (ANKRD36B) of Homo sapiens (Human).